Here is a 365-residue protein sequence, read N- to C-terminus: Protein-glutamate methylesterase/protein-glutamine glutaminase (365 aa).

The 118-residue stretch at 5–122 folds into the Response regulatory domain; sequence KVLIVDDSAF…SLDIRKIGEK (118 aa). 4-aspartylphosphate is present on aspartate 56. Residues 146–155 show a composition bias toward basic and acidic residues; sequence IKKEKQDESS. Residues 146–167 are disordered; the sequence is IKKEKQDESSTPKPQVEKTSGL. The segment covering 156 to 167 has biased composition (polar residues); sequence TPKPQVEKTSGL. Residues 177–363 enclose the CheB-type methylesterase domain; sequence ILIGSSTGGP…LEIIKFAKKI (187 aa). Residues serine 182, histidine 208, and aspartate 305 contribute to the active site.

The protein belongs to the CheB family. In terms of processing, phosphorylated by CheA. Phosphorylation of the N-terminal regulatory domain activates the methylesterase activity.

The protein resides in the cytoplasm. The catalysed reaction is [protein]-L-glutamate 5-O-methyl ester + H2O = L-glutamyl-[protein] + methanol + H(+). It carries out the reaction L-glutaminyl-[protein] + H2O = L-glutamyl-[protein] + NH4(+). Its function is as follows. Involved in chemotaxis. Part of a chemotaxis signal transduction system that modulates chemotaxis in response to various stimuli. Catalyzes the demethylation of specific methylglutamate residues introduced into the chemoreceptors (methyl-accepting chemotaxis proteins or MCP) by CheR. Also mediates the irreversible deamidation of specific glutamine residues to glutamic acid. The protein is Protein-glutamate methylesterase/protein-glutamine glutaminase of Methanococcus maripaludis (strain DSM 14266 / JCM 13030 / NBRC 101832 / S2 / LL).